The following is a 370-amino-acid chain: uncharacterized protein (370 aa).

D152, H154, D184, N215, H306, and H308 together coordinate a divalent metal cation.

It belongs to the metallophosphoesterase superfamily. A divalent metal cation serves as cofactor.

This is an uncharacterized protein from Helicobacter pylori (strain J99 / ATCC 700824) (Campylobacter pylori J99).